A 36-amino-acid polypeptide reads, in one-letter code: Potassium channel toxin alpha-KTx 6.14 (36 aa).

Disulfide bonds link cysteine 5–cysteine 25, cysteine 11–cysteine 30, cysteine 15–cysteine 32, and cysteine 20–cysteine 35.

Expressed by the venom gland.

The protein resides in the secreted. Functionally, blocks Shaker B channels expressed in Sf9 cells, with a dissociation constant of 52 nM. In Hoffmannihadrurus gertschi (Scorpion), this protein is Potassium channel toxin alpha-KTx 6.14.